We begin with the raw amino-acid sequence, 476 residues long: Aspartyl/glutamyl-tRNA(Asn/Gln) amidotransferase subunit B (476 aa).

Belongs to the GatB/GatE family. GatB subfamily. As to quaternary structure, heterotrimer of A, B and C subunits.

It carries out the reaction L-glutamyl-tRNA(Gln) + L-glutamine + ATP + H2O = L-glutaminyl-tRNA(Gln) + L-glutamate + ADP + phosphate + H(+). It catalyses the reaction L-aspartyl-tRNA(Asn) + L-glutamine + ATP + H2O = L-asparaginyl-tRNA(Asn) + L-glutamate + ADP + phosphate + 2 H(+). Functionally, allows the formation of correctly charged Asn-tRNA(Asn) or Gln-tRNA(Gln) through the transamidation of misacylated Asp-tRNA(Asn) or Glu-tRNA(Gln) in organisms which lack either or both of asparaginyl-tRNA or glutaminyl-tRNA synthetases. The reaction takes place in the presence of glutamine and ATP through an activated phospho-Asp-tRNA(Asn) or phospho-Glu-tRNA(Gln). The chain is Aspartyl/glutamyl-tRNA(Asn/Gln) amidotransferase subunit B from Clostridium kluyveri (strain ATCC 8527 / DSM 555 / NBRC 12016 / NCIMB 10680 / K1).